We begin with the raw amino-acid sequence, 416 residues long: MNRFHISGPKNLSGEIKISGSKNAALPILLTSLLISEPIKLKNVPKLTDIMYAIKILTKLGVKIKVEKKVLYIDAKTIAICTIPDYLTKKTRASIWILGPLLARFGQAKISLPGGCKIGKRKIDLHLSGLKKLGANIAIKNNYIIGSVITKLIGNTIVLPIASVGATITIMSAATIATGITIINNAAREPEIIDVANFLNKLGAKIIGAGSKNIFITGVLKLHGGSYTIMPDRIETGTFLVAAAISNGSIICHNTKPNVLINLTKKLCETGAQIKTGTNWISLNMKGIYSKAINIKTAPYPGFPTDMQAIFSLLNLVSHGNSIVTETIFENRFSYVSELKKMGAKAQIKNNSLFCYGVKKLYSATVFASDLRSCASLILAGCIADGTTIVKNIHYIKRGYERFQEKLQSIGAKICN.

Residue 22 to 23 (KN) coordinates phosphoenolpyruvate. UDP-N-acetyl-alpha-D-glucosamine is bound at residue Arg92. The Proton donor role is filled by Cys116. Cys116 bears the 2-(S-cysteinyl)pyruvic acid O-phosphothioketal mark. Residues Asp306 and Ile328 each contribute to the UDP-N-acetyl-alpha-D-glucosamine site.

Belongs to the EPSP synthase family. MurA subfamily.

The protein resides in the cytoplasm. The catalysed reaction is phosphoenolpyruvate + UDP-N-acetyl-alpha-D-glucosamine = UDP-N-acetyl-3-O-(1-carboxyvinyl)-alpha-D-glucosamine + phosphate. It participates in cell wall biogenesis; peptidoglycan biosynthesis. Functionally, cell wall formation. Adds enolpyruvyl to UDP-N-acetylglucosamine. The chain is UDP-N-acetylglucosamine 1-carboxyvinyltransferase from Buchnera aphidicola subsp. Baizongia pistaciae (strain Bp).